The sequence spans 115 residues: Methylmalonyl-CoA decarboxylase subunit delta (115 aa).

The chain crosses the membrane as a helical span at residues 11–31; the sequence is WLIMAINMTVVFAVLIALGIL. A disordered region spans residues 46–70; it reads EAPAATAPVATPTATPVAPANASAQ. A compositionally biased stretch (low complexity) spans 48–65; sequence PAATAPVATPTATPVAPA.

Belongs to the OadG family. As to quaternary structure, the methylmalonyl-CoA decarboxylase is composed of five subunits: the carboxyltransferase alpha subunit (MmdA), the tunnel beta subunit (MmdB), the biotin-containing gamma subunit (MmdC), and the delta (MmdD) and epsilon (MmdE) subunits. In terms of processing, the N-terminus is blocked.

The protein resides in the cell membrane. It carries out the reaction (S)-methylmalonyl-CoA + Na(+)(in) + H(+)(out) = propanoyl-CoA + Na(+)(out) + CO2. Completely inhibited by avidin. Its function is as follows. Subunit of the sodium ion pump methylmalonyl-CoA decarboxylase, which converts the chemical energy of a decarboxylation reaction into an electrochemical gradient of Na(+) ions across the cytoplasmic membrane, thereby creating a sodium ion motive force that is used for ATP synthesis. The delta subunit is required for catalytic activity as well as for the proper assembly of the individual subunits to an enzyme complex. Can also convert malonyl-CoA into acetyl-CoA. This is Methylmalonyl-CoA decarboxylase subunit delta from Veillonella parvula (Staphylococcus parvulus).